The chain runs to 91 residues: Small ribosomal subunit protein uS19m (91 aa).

Belongs to the universal ribosomal protein uS19 family. In terms of assembly, component of the mitochondrial small ribosomal subunit (mt-SSU). Mature yeast 74S mitochondrial ribosomes consist of a small (37S) and a large (54S) subunit. The 37S small subunit contains a 15S ribosomal RNA (15S mt-rRNA) and 34 different proteins. The 54S large subunit contains a 21S rRNA (21S mt-rRNA) and 46 different proteins.

It localises to the mitochondrion. Component of the mitochondrial ribosome (mitoribosome), a dedicated translation machinery responsible for the synthesis of mitochondrial genome-encoded proteins, including at least some of the essential transmembrane subunits of the mitochondrial respiratory chain. The mitoribosomes are attached to the mitochondrial inner membrane and translation products are cotranslationally integrated into the membrane. This Saccharomyces cerevisiae (strain ATCC 204508 / S288c) (Baker's yeast) protein is Small ribosomal subunit protein uS19m (RSM19).